Consider the following 110-residue polypeptide: MKKLLAMILWLQLDRLSGELKVEQNPLFLSMQEGKNYTIYCNYSTTSDRLYWYRQDPGKSLESLFVLLSNGAVKQEGRLMASLDTKARLSTLHITAAVHDLSATYFCAVD.

Positions 1–18 (MKKLLAMILWLQLDRLSG) are cleaved as a signal peptide. In terms of domain architecture, Ig-like spans 19 to 110 (ELKVEQNPLF…LSATYFCAVD (92 aa)). N-linked (GlcNAc...) asparagine glycosylation is found at N36 and N42. A disulfide bridge connects residues C41 and C107.

As to quaternary structure, alpha-beta TR is a heterodimer composed of an alpha and beta chain; disulfide-linked. The alpha-beta TR is associated with the transmembrane signaling CD3 coreceptor proteins to form the TR-CD3 (TcR or TCR). The assembly of alpha-beta TR heterodimers with CD3 occurs in the endoplasmic reticulum where a single alpha-beta TR heterodimer associates with one CD3D-CD3E heterodimer, one CD3G-CD3E heterodimer and one CD247 homodimer forming a stable octameric structure. CD3D-CD3E and CD3G-CD3E heterodimers preferentially associate with TR alpha and TR beta chains, respectively. The association of the CD247 homodimer is the last step of TcR assembly in the endoplasmic reticulum and is required for transport to the cell surface.

Its subcellular location is the cell membrane. V region of the variable domain of T cell receptor (TR) alpha chain that participates in the antigen recognition. Alpha-beta T cell receptors are antigen specific receptors which are essential to the immune response and are present on the cell surface of T lymphocytes. Recognize peptide-major histocompatibility (MH) (pMH) complexes that are displayed by antigen presenting cells (APC), a prerequisite for efficient T cell adaptive immunity against pathogens. Binding of alpha-beta TR to pMH complex initiates TR-CD3 clustering on the cell surface and intracellular activation of LCK that phosphorylates the ITAM motifs of CD3G, CD3D, CD3E and CD247 enabling the recruitment of ZAP70. In turn ZAP70 phosphorylates LAT, which recruits numerous signaling molecules to form the LAT signalosome. The LAT signalosome propagates signal branching to three major signaling pathways, the calcium, the mitogen-activated protein kinase (MAPK) kinase and the nuclear factor NF-kappa-B (NF-kB) pathways, leading to the mobilization of transcription factors that are critical for gene expression and essential for T cell growth and differentiation. The T cell repertoire is generated in the thymus, by V-(D)-J rearrangement. This repertoire is then shaped by intrathymic selection events to generate a peripheral T cell pool of self-MH restricted, non-autoaggressive T cells. Post-thymic interaction of alpha-beta TR with the pMH complexes shapes TR structural and functional avidity. In Homo sapiens (Human), this protein is T cell receptor alpha variable 39.